A 238-amino-acid chain; its full sequence is Ribosome-recycling factor, mitochondrial (238 aa).

The protein belongs to the RRF family.

Its subcellular location is the mitochondrion. Functionally, responsible for the release of ribosomes from messenger RNA at the termination of protein biosynthesis. May increase the efficiency of translation by recycling ribosomes from one round of translation to another. In Caenorhabditis elegans, this protein is Ribosome-recycling factor, mitochondrial.